Consider the following 469-residue polypeptide: Programmed cell death protein 4 (469 aa).

An N-acetylmethionine modification is found at Met-1. Residues 1-23 (MDIENEQTLNVNPTDPDNLSDSL) are compositionally biased toward polar residues. 2 disordered regions span residues 1 to 37 (MDIE…EEIK) and 58 to 128 (KAKR…GTPG). Residue Ser-25 is modified to Phosphoserine. A Nuclear localization signal motif is present at residues 58–64 (KAKRRLR). Position 67 is a phosphoserine; by PKB and RPS6KB1 (Ser-67). Phosphoserine is present on residues Ser-68, Ser-71, Ser-76, Ser-78, and Ser-94. A Phosphodegron motif is present at residues 70 to 76 (DSGRGDS). Gly residues predominate over residues 114–125 (KKGGAGGKGVWG). Tyr-152 carries the post-translational modification Phosphotyrosine. The 122-residue stretch at 163-284 (AFEKTLTPII…CNTYIDSYKG (122 aa)) folds into the MI 1 domain. Residues Ser-313 and Ser-317 each carry the phosphoserine modification. Residues 326–449 (HLVKEIDMLL…SKQLRDLCPS (124 aa)) enclose the MI 2 domain. The Nuclear localization signal motif lies at 448 to 454 (PSRGRKR). Ser-457 carries the post-translational modification Phosphoserine; by PKB.

This sequence belongs to the PDCD4 family. Interacts (via MI domains) with EIF4A1 and EIF4A2 (via N-terminal domain). Heterotrimer with EIF4A1; one molecule of PDCD4 binds two molecules of EIF4A1. Interacts with EIF4G1. May form a complex with EIF4A1 and EIF4G1. The interaction between PDCD4 and EIF4A1 interferes with the interaction between EIF4A1 and EIF4G. When phosphorylated, interacts with BTRC and FBXW11. In terms of processing, polyubiquitinated, leading to its proteasomal degradation. Rapidly degraded in response to mitogens. Phosphorylation of the phosphodegron promotes interaction with BTRC and proteasomal degradation. Phosphorylated at Ser-67 by RPS6KB1 in response to mitogens; phosphorylation promotes proteasomal degradation of PDCD4. In terms of tissue distribution, expressed ubiquitously. Highyly expressed in thymus and liver. Moderately expressed in brain, kidney and spleen; weakly in lung and heart. Expression is up- or down-regulated in response to apoptosis inducers. Regulated by many programmed cell death-inducing stimuli.

It localises to the nucleus. It is found in the cytoplasm. In terms of biological role, inhibits translation initiation and cap-dependent translation. May excert its function by hindering the interaction between EIF4A1 and EIF4G. Inhibits the helicase activity of EIF4A. Modulates the activation of JUN kinase. Down-regulates the expression of MAP4K1, thus inhibiting events important in driving invasion, namely, MAPK85 activation and consequent JUN-dependent transcription. May play a role in apoptosis. Tumor suppressor. Inhibits tumor promoter-induced neoplastic transformation. Binds RNA. The sequence is that of Programmed cell death protein 4 (Pdcd4) from Mus musculus (Mouse).